The chain runs to 284 residues: Spermidine synthase (284 aa).

Residues 6-241 (NGWFSEISEF…GSIGFILCSL (236 aa)) form the PABS domain. Glutamine 37 is an S-adenosyl 3-(methylsulfanyl)propylamine binding site. Position 67 (tyrosine 67) interacts with putrescine. Residues glutamine 68, aspartate 92, glutamate 112, 143-144 (DG), and aspartate 161 contribute to the S-adenosyl 3-(methylsulfanyl)propylamine site. Aspartate 161 functions as the Proton acceptor in the catalytic mechanism. Putrescine contacts are provided by residues 161-164 (DSSD) and tyrosine 229.

Belongs to the spermidine/spermine synthase family.

The catalysed reaction is S-adenosyl 3-(methylsulfanyl)propylamine + putrescine = S-methyl-5'-thioadenosine + spermidine + H(+). The protein operates within amine and polyamine biosynthesis; spermidine biosynthesis; spermidine from putrescine: step 1/1. In terms of biological role, catalyzes the production of spermidine from putrescine and decarboxylated S-adenosylmethionine (dcSAM). Has a strong preference for putrescine as substrate. This is Spermidine synthase (spsA) from Dictyostelium discoideum (Social amoeba).